The chain runs to 516 residues: Putative glucosylceramidase 2 (516 aa).

An N-terminal signal peptide occupies residues 1–23 (MSIAWSCFVLGLFALASLQVALA). The Proton donor role is filled by E254. The Nucleophile role is filled by E358.

Belongs to the glycosyl hydrolase 30 family.

It catalyses the reaction a beta-D-glucosylceramide + H2O = an N-acyl-sphingoid base + D-glucose. It carries out the reaction a beta-D-glucosyl-(1&lt;-&gt;1')-N-acylsphing-4-enine + H2O = an N-acylsphing-4-enine + D-glucose. The enzyme catalyses an N-acyl-1-beta-D-glucosyl-15-methylhexadecasphing-4-enine + H2O = an N-acyl-15-methylhexadecasphing-4-enine + D-glucose. It functions in the pathway lipid metabolism; sphingolipid metabolism. In terms of biological role, glucosylceramidase that catalyzes the hydrolysis of glucosylceramides into free ceramides and glucose. C.elegans contain specific sphingoid bases, which are unique or different in structure compared to the sphingoid bases found in other animals. Two examples of these distinctive compounds are: 15-methylhexadecasphinganine and 15-methylhexadecasphing-4-enine. The sequence is that of Putative glucosylceramidase 2 (gba-2) from Caenorhabditis elegans.